The following is a 350-amino-acid chain: Probable DNA polymerase III subunit delta (350 aa).

It belongs to the DNA polymerase HolA subunit family. In terms of assembly, component of the DNA clamp loading complex consisting of tau(3):delta(1):delta'(1). The DNA polymerase III holoenzyme complex contains at least 10 different subunits organized into 3 functionally essential subassemblies: the Pol III core, the beta sliding clamp processivity factor and the clamp-loading complex. The Pol III core (subunits alpha, epsilon and theta) contains the polymerase and the 3'-5' exonuclease proofreading activities. The polymerase is tethered to the template via the dimeric beta sliding clamp processivity factor. The DNA clamp-loading complex assembles the beta sliding clamp onto the primed template and plays a central role in the organization and communication at the replication fork.

It carries out the reaction DNA(n) + a 2'-deoxyribonucleoside 5'-triphosphate = DNA(n+1) + diphosphate. Part of the beta sliding clamp loading complex, which hydrolyzes ATP to load the beta clamp onto primed DNA to form the DNA replication pre-initiation complex. DNA polymerase III is a complex, multichain enzyme responsible for most of the replicative synthesis in bacteria. This DNA polymerase also exhibits 3'-5' exonuclease activity. The delta subunit is the wrench that will open the beta subunit dimer. The DNA clamp loading complex (tau(3),delta,delta') is thought to load beta dimers onto DNA by binding ATP which alters the complex's conformation so it can bind beta sliding clamp dimers and open them at one interface. Primed DNA is recognized, ATP is hydrolyzed releasing the clamp loading complex and closing the beta sliding clamp ring around the primed DNA. This Aquifex aeolicus (strain VF5) protein is Probable DNA polymerase III subunit delta.